Reading from the N-terminus, the 216-residue chain is CRIB domain-containing protein RIC7 (216 aa).

The 14-residue stretch at 36 to 49 (IGNPTDVKHVAHIG) folds into the CRIB domain. Residues 52 to 216 (GPSDNATAPS…PQFEDDRNGF (165 aa)) are disordered. Residues 108 to 121 (SSSEKGSPTKERSD) show a composition bias toward basic and acidic residues.

Interacts with ARAC4/ROP2 and ARAC11/ROP1. As to expression, expressed in roots, leaves, guard cells, stems, flowers, siliques and pollen.

The protein resides in the nucleus. It localises to the cytoplasm. Its subcellular location is the cell membrane. Functionally, functions as a downstream effector of Rho-related GTP binding proteins of the 'Rho of Plants' (ROPs) family. Participates in the propagation of ROP GTPase signals in specific cellular responses. Functions as a downstream effector of active ARAC4/ROP2 GTPase which is involved in the prevention of excessive stomatal opening upon light stimulation. Is involved in pollen tube growth regulation through its interaction with ARAC11/ROP1. In Arabidopsis thaliana (Mouse-ear cress), this protein is CRIB domain-containing protein RIC7 (RIC7).